Consider the following 969-residue polypeptide: Leucine--tRNA ligase (969 aa).

Residues 1 to 23 (MTESPTTSPATGSGAAAPDSDAP) form a disordered region. The short motif at 78 to 89 (PYPSGEGLHVGH) is the 'HIGH' region element. The short motif at 737–741 (KIGKS) is the 'KMSKS' region element. Lys-740 serves as a coordination point for ATP.

This sequence belongs to the class-I aminoacyl-tRNA synthetase family.

Its subcellular location is the cytoplasm. The catalysed reaction is tRNA(Leu) + L-leucine + ATP = L-leucyl-tRNA(Leu) + AMP + diphosphate. In Mycolicibacterium paratuberculosis (strain ATCC BAA-968 / K-10) (Mycobacterium paratuberculosis), this protein is Leucine--tRNA ligase.